The sequence spans 60 residues: Putative per-hexamer repeat protein 1 (60 aa).

The chain is Putative per-hexamer repeat protein 1 (Phxr1) from Mus musculus (Mouse).